Consider the following 277-residue polypeptide: Short chain dehydrogenase penD (277 aa).

Residues Ile28, Asp76, and Asn105 each contribute to the NADP(+) site. Residues Ser158 and Ser159 each act as proton donor in the active site. Tyr173, Lys177, and Thr209 together coordinate NADP(+). Catalysis depends on Tyr173, which acts as the Proton acceptor. The Lowers pKa of active site Tyr role is filled by Lys177.

Belongs to the short-chain dehydrogenases/reductases (SDR) family.

It catalyses the reaction yaequinolone D + NADPH + H(+) = penigequinolone A + NADP(+) + H2O. The catalysed reaction is yaequinolone D + NADPH + H(+) = penigequinolone B + NADP(+) + H2O. The protein operates within secondary metabolite biosynthesis. Its pathway is alkaloid biosynthesis. It functions in the pathway mycotoxin biosynthesis. Its function is as follows. Short chain dehydrogenase; part of the gene cluster that mediates the biosynthesis of penigequinolones, potent insecticidal alkaloids that contain a highly modified 10-carbon prenyl group. The first stage is catalyzed by the nonribosomal peptide synthetase penN that condenses anthranilic acid and O-methyl-L-tyrosine to produce 4'-methoxycyclopeptin. 4'-methoxycyclopeptin is then converted to 4'-methoxydehydrocyclopeptin by the ketoglutarate-dependent dioxygenase penM through dehydrogenation to form a double bond between C-alpha and C-beta of the O-methyltyrosine side chain. PenM also converts its first product methoxydehydrocyclopeptin to 4'-methoxycyclopenin. The following conversion of 4'methoxycyclopenin into 4'-methoxyviridicatin is catalyzed by the cyclopenase penL. 4'-methoxyviridicatin is the precursor of quinolone natural products, and is further converted to quinolinone B. The prenyltransferase penI then catalyzes the canonical Friedel-Crafts alkylation of quinolinone B with dimethylallyl cation to yield dimethylallyl quinolone, which is subjected to FAD-dependent dehydrogenation by the FAD-linked oxidoreductase penH to yield conjugated aryl diene. The delta(3') double bond then serves as the site of the second alkylation with DMAPP catalyzed by the prenyltransferase penG to yield a carbenium ion intermediate, which can be attacked by H(2)O to yield a styrenyl quinolone containing a C3'-hydroxyprenyl chain, or undergo cyclization to yield yaequinolones J1 and J2. The conversion of the styrenyl quinolone into the tetrahydrofuran-containing yaequinolone C is performed by the FAD-dependent monooxygenase penE and involves epoxidation of the terminal C7'-C8' olefin, followed by epoxide ring opening initiated by the C3' hydroxyl group. The predicted cysteine hydrolase penJ acts as an epoxide hydrolase that enhances the rate of the 5-exo-tet cyclization step, increasing the yield of yaequinolone C. PenF catalyzes the cationic rearrangement of the epoxide formed by penE (before ring opening to produce yaequinolone C) into yaequinolone D. Finally, the short-chain dehydrogenase/reductase (SDR)-like reductase penD, catalyzes both the dehydration of yaequinolone D and the reduction of the resulting oxonium to yield penigequinolone. This Penicillium thymicola protein is Short chain dehydrogenase penD.